Reading from the N-terminus, the 798-residue chain is Nuclear cap-binding protein subunit 1 (798 aa).

The MIF4G domain maps to 28 to 241; that stretch reads EKKLQGVIGK…SLSAQIEALR (214 aa). The tract at residues 663 to 686 is disordered; sequence NKIKEEDDEESDIKMDEDETKEEK. Residues 668 to 682 show a composition bias toward acidic residues; sequence EDDEESDIKMDEDET.

The protein belongs to the NCBP1 family. In terms of assembly, component of the nuclear cap-binding complex (CBC), a heterodimer composed of ncbp-1 and ncbp-1 that interacts with m7GpppG-capped RNA.

It localises to the nucleus. Its function is as follows. Component of the cap-binding complex (CBC), which binds cotranscriptionally to the 5'-cap of pre-mRNAs and is involved in various processes such as pre-mRNA splicing and RNA-mediated gene silencing (RNAi). The CBC complex is involved in miRNA-mediated RNA interference and is required for primary microRNAs (miRNAs) processing. In the CBC complex, ncbp-1 does not bind directly capped RNAs (m7GpppG-capped RNA) but is required to stabilize the movement of the N-terminal loop of ncbp-2 and lock the CBC into a high affinity cap-binding state with the cap structure. The sequence is that of Nuclear cap-binding protein subunit 1 (ncbp-1) from Caenorhabditis elegans.